A 938-amino-acid chain; its full sequence is Isoleucine--tRNA ligase (938 aa).

A 'HIGH' region motif is present at residues 58-68 (PYANGSIHIGH). N6-acetyllysine is present on lysine 183. L-isoleucyl-5'-AMP is bound at residue glutamate 561. The 'KMSKS' region signature appears at 602–606 (KMSKS). Lysine 605 is a binding site for ATP. Residues cysteine 901, cysteine 904, cysteine 921, and cysteine 924 each contribute to the Zn(2+) site.

The protein belongs to the class-I aminoacyl-tRNA synthetase family. IleS type 1 subfamily. As to quaternary structure, monomer. Zn(2+) is required as a cofactor.

Its subcellular location is the cytoplasm. The enzyme catalyses tRNA(Ile) + L-isoleucine + ATP = L-isoleucyl-tRNA(Ile) + AMP + diphosphate. In terms of biological role, catalyzes the attachment of isoleucine to tRNA(Ile). As IleRS can inadvertently accommodate and process structurally similar amino acids such as valine, to avoid such errors it has two additional distinct tRNA(Ile)-dependent editing activities. One activity is designated as 'pretransfer' editing and involves the hydrolysis of activated Val-AMP. The other activity is designated 'posttransfer' editing and involves deacylation of mischarged Val-tRNA(Ile). The polypeptide is Isoleucine--tRNA ligase (Escherichia coli (strain ATCC 8739 / DSM 1576 / NBRC 3972 / NCIMB 8545 / WDCM 00012 / Crooks)).